The sequence spans 385 residues: 1-deoxy-D-xylulose 5-phosphate reductoisomerase (385 aa).

Residues T11, G12, S13, I14, A37, R38, N39, and N123 each contribute to the NADPH site. Residue K124 coordinates 1-deoxy-D-xylulose 5-phosphate. Residue E125 coordinates NADPH. D149 serves as a coordination point for Mn(2+). Positions 150, 151, 173, and 196 each coordinate 1-deoxy-D-xylulose 5-phosphate. E151 lines the Mn(2+) pocket. G202 serves as a coordination point for NADPH. 1-deoxy-D-xylulose 5-phosphate-binding residues include S209, N214, K215, and E218. Residue E218 coordinates Mn(2+).

It belongs to the DXR family. Requires Mg(2+) as cofactor. The cofactor is Mn(2+).

It carries out the reaction 2-C-methyl-D-erythritol 4-phosphate + NADP(+) = 1-deoxy-D-xylulose 5-phosphate + NADPH + H(+). The protein operates within isoprenoid biosynthesis; isopentenyl diphosphate biosynthesis via DXP pathway; isopentenyl diphosphate from 1-deoxy-D-xylulose 5-phosphate: step 1/6. Functionally, catalyzes the NADPH-dependent rearrangement and reduction of 1-deoxy-D-xylulose-5-phosphate (DXP) to 2-C-methyl-D-erythritol 4-phosphate (MEP). The sequence is that of 1-deoxy-D-xylulose 5-phosphate reductoisomerase from Moorella thermoacetica (strain ATCC 39073 / JCM 9320).